A 395-amino-acid chain; its full sequence is tRNA (guanine-N(7)-)-methyltransferase (395 aa).

S-adenosyl-L-methionine-binding residues include Glu126, Glu151, and Asp178. Residues Lys204 and Asp234 each contribute to the substrate site.

Belongs to the class I-like SAM-binding methyltransferase superfamily. TrmB family.

The enzyme catalyses guanosine(46) in tRNA + S-adenosyl-L-methionine = N(7)-methylguanosine(46) in tRNA + S-adenosyl-L-homocysteine. Its pathway is tRNA modification; N(7)-methylguanine-tRNA biosynthesis. Its function is as follows. Catalyzes the formation of N(7)-methylguanine at position 46 (m7G46) in tRNA. The chain is tRNA (guanine-N(7)-)-methyltransferase from Campylobacter fetus subsp. fetus (strain 82-40).